A 554-amino-acid chain; its full sequence is HMG box-containing protein 4 (554 aa).

Disordered stretches follow at residues 15–368 (GTED…AYQV) and 417–469 (HKQN…PAKV). Basic and acidic residues predominate over residues 75–88 (SSDDYHADHSTDSA). Low complexity predominate over residues 95–105 (SLPSPSSSDTA). Residues 113–123 (TSPQADTSTTH) are compositionally biased toward polar residues. 2 stretches are compositionally biased toward basic and acidic residues: residues 145 to 154 (PHKDYHKKSG) and 217 to 226 (LGREEIESRS). Over residues 236 to 251 (YTPRSGGTPDSASSTG) the composition is skewed to polar residues. The segment covering 268–296 (MKKKKKSKKSKKKKDKHKDEKHKKHSKSK) has biased composition (basic residues). The span at 313 to 332 (LPSPPPPPATTPPTSPPSIP) shows a compositional bias: pro residues. Positions 341–357 (HTEEQSDKKKKKEDPEK) are enriched in basic and acidic residues. A DNA-binding region (HMG box) is located at residues 359–427 (KKKNMSAYQV…KQNKAEATTV (69 aa)). Low complexity-rich tracts occupy residues 433-445 (SSES…GSSS) and 454-467 (SPTS…TSPA).

As to quaternary structure, interacts with nlk.2.

The protein localises to the nucleus. Functionally, negatively regulates Wnt/beta-catenin signaling during development. In Xenopus laevis (African clawed frog), this protein is HMG box-containing protein 4 (hmgxb4).